Reading from the N-terminus, the 102-residue chain is Small ribosomal subunit protein uS14 (102 aa).

The protein belongs to the universal ribosomal protein uS14 family. As to quaternary structure, part of the 30S ribosomal subunit. Contacts proteins S3 and S10.

In terms of biological role, binds 16S rRNA, required for the assembly of 30S particles and may also be responsible for determining the conformation of the 16S rRNA at the A site. The protein is Small ribosomal subunit protein uS14 of Wolbachia pipientis subsp. Culex pipiens (strain wPip).